The chain runs to 178 residues: Epididymal-specific lipocalin-9 (178 aa).

A signal peptide spans 1-16; it reads MVLLLVLGLVLSLATA. N-linked (GlcNAc...) asparagine glycosylation is found at Asn-46, Asn-68, and Asn-129. An intrachain disulfide couples Cys-83 to Cys-176.

This sequence belongs to the calycin superfamily. Lipocalin family. Expressed in epididymis. Not detected in all other tissues tested.

The protein resides in the secreted. This Mus musculus (Mouse) protein is Epididymal-specific lipocalin-9 (Lcn9).